We begin with the raw amino-acid sequence, 262 residues long: Nurim (262 aa).

At 1 to 4 (MAPA) the chain is on the nuclear side. A helical membrane pass occupies residues 5–28 (LLLVPAALASFILAFGTGVEFVRF). The Perinuclear space segment spans residues 29 to 58 (TSLRPLLGGIPESGGPDARQGWLAALQDQS). The helical transmembrane segment at 59–80 (ILVPLAWDLGLLLLFVGQHSLM) threads the bilayer. At 81 to 97 (ATETVKAWMSRYFGVLQ) the chain is on the nuclear side. The chain crosses the membrane as a helical span at residues 98 to 114 (RSLYVACTALALQLVMR). The Perinuclear space portion of the chain corresponds to 115-133 (YWEPVPRGPVLWEAQAEPW). The helical transmembrane segment at 134–164 (ATWVPLLCFVLHVISWLLIFSILLVFDYAEL) threads the bilayer. Topologically, residues 165–191 (MGLKQVYYHVLGLGEPLALKSPRALRL) are nuclear. Residues 192-210 (FSHLRHPVCVELLTVLWVV) form a helical membrane-spanning segment. Over 211-216 (PTLGTD) the chain is Perinuclear space. The chain crosses the membrane as a helical span at residues 217–234 (RLLLALLLTLYLGLAHGL). Topologically, residues 235-262 (DQQDLRYLRAQLQRKLHLLSRPQDGEAE) are nuclear.

It belongs to the nurim family.

It localises to the nucleus inner membrane. This Sus scrofa (Pig) protein is Nurim (NRM).